The following is a 244-amino-acid chain: T-cell immunoreceptor with Ig and ITIM domains (244 aa).

The N-terminal stretch at 1-21 (MRWCLLLIWAQGLRQAPLASG) is a signal peptide. The Ig-like V-type domain occupies 22–124 (MMTGTIETTG…DGTYTGRIFL (103 aa)). The Extracellular portion of the chain corresponds to 22–141 (MMTGTIETTG…AEHGARFQIP (120 aa)). 2 N-linked (GlcNAc...) asparagine glycosylation sites follow: N32 and N101. Residues 32–42 (NISAEKGGSII) are homodimerization. Cysteines 45 and 108 form a disulfide. Residues 142–162 (LLGAMAATLVVICTAVIVVVA) traverse the membrane as a helical segment. At 163-244 (LTRKKKALRI…GNCSFFTETG (82 aa)) the chain is on the cytoplasmic side. Phosphotyrosine is present on Y225. Positions 229–234 (LSYRSL) match the ITIM motif motif.

Homodimer in cis; binds with high affinity to PVR, forming a heterotetrameric assembly of two TIGIT and two PVR molecules. Binds with lower affinity to NECTIN2 and NECTIN3. Interacts with GRB2. Interacts with NECTIN4. Expressed at low levels on peripheral memory and regulatory CD4+ T-cells and NK cells and is up-regulated following activation of these cells (at protein level).

The protein localises to the cell membrane. In terms of biological role, inhibitory receptor that plays a role in the modulation of immune responses. Suppresses T-cell activation by promoting the generation of mature immunoregulatory dendritic cells. Upon binding to its ligands PVR/CD155 or NECTIN2/CD112, which are expressed on antigen-presenting cells, sends inhibitory signals to the T-cell or NK cell. Mechanistically, interaction with ligand leads to phosphorylation of the cytoplasmic tail by Src family tyrosine kinases such as FYN or LCK, allowing subsequent binding to adapter GRB2 and SHIP1/INPP5D. In turn, inhibits PI3K and MAPK signaling cascades. In addition, associates with beta-arrestin-2/ARRB2 to recruit SHIP1/INPP5D that suppresses autoubiquitination of TRAF6 and subsequently inhibits NF-kappa-B signaling pathway. Also acts as a receptor for NECTIN4 to inhibit NK cell cytotoxicity. The protein is T-cell immunoreceptor with Ig and ITIM domains (TIGIT) of Homo sapiens (Human).